Consider the following 444-residue polypeptide: Protein-serine O-palmitoleoyltransferase porcupine (444 aa).

The next 10 helical transmembrane spans lie at 29-49 (NGTL…FLVW), 81-101 (VMIF…KLNG), 128-150 (FLTL…FAIV), 163-183 (TLYL…YVTF), 201-221 (LGVF…AIIS), 249-269 (YFIC…IVVA), 304-324 (FFQS…LLHA), 326-346 (DYQM…ETVF), 383-403 (VLII…FTGM), and 420-440 (WTIW…FLAL). The active site involves histidine 323.

It belongs to the membrane-bound acyltransferase family. Porcupine subfamily.

It is found in the membrane. It catalyses the reaction [Wnt protein]-L-serine + (9Z)-hexadecenoyl-CoA = [Wnt protein]-O-(9Z)-hexadecenoyl-L-serine + CoA. Its function is as follows. Key regulator of the Wnt signaling pathway that mediates lipid modification of Wnt proteins. Acts as a protein-serine O-palmitoleoyltransferase that catalyzes the attachment of palmitoleate, a 16-carbon monounsaturated fatty acid (C16:1(9Z)), to Wnt proteins. Serine palmitoleoylation of WNT proteins is required for efficient binding to frizzled receptors. Has a role in cell specification, specifically in blastomere signaling. Involved in cytosketetal polarity. Required for the orientation of mitotic spindle axis. This chain is Protein-serine O-palmitoleoyltransferase porcupine, found in Caenorhabditis briggsae.